We begin with the raw amino-acid sequence, 528 residues long: Probable serine protease HtrA1 (528 aa).

The segment at 1–70 (MDTRVDTDNA…RPSGVQGSFV (70 aa)) is disordered. The Cytoplasmic segment spans residues 1-178 (MDTRVDTDNA…DVLFGGKVSY (178 aa)). A compositionally biased stretch (gly residues) spans 31–40 (NNGGPNGGGR). Residues 179–199 (LALGILVAIALVIGGIGGVIG) form a helical membrane-spanning segment. The Periplasmic segment spans residues 200-528 (RKTAEVVDAF…LTVKPDPDST (329 aa)). Active-site charge relay system residues include histidine 270, aspartate 306, and serine 387. In terms of domain architecture, PDZ spans 426-487 (LVANSLIKDG…VIVKVGNRAV (62 aa)).

The protein belongs to the peptidase S1C family. As to quaternary structure, the C-terminal region exhibits both monomeric and trimeric forms in solution.

It is found in the cell inner membrane. It catalyses the reaction Acts on substrates that are at least partially unfolded. The cleavage site P1 residue is normally between a pair of hydrophobic residues, such as Val-|-Val.. Its function is as follows. Essential protein that may act as a regulatory protease that is conditionally activated upon appropriate environmental triggers. This Mycobacterium tuberculosis (strain ATCC 25618 / H37Rv) protein is Probable serine protease HtrA1.